Reading from the N-terminus, the 327-residue chain is Lipoyl synthase (327 aa).

The [4Fe-4S] cluster site is built by Cys72, Cys77, Cys83, Cys98, Cys102, Cys105, and Ser313. The Radical SAM core domain occupies 83-302 (CWSHGTATIM…RKVGLEKGFL (220 aa)).

It belongs to the radical SAM superfamily. Lipoyl synthase family. The cofactor is [4Fe-4S] cluster.

The protein localises to the cytoplasm. The enzyme catalyses [[Fe-S] cluster scaffold protein carrying a second [4Fe-4S](2+) cluster] + N(6)-octanoyl-L-lysyl-[protein] + 2 oxidized [2Fe-2S]-[ferredoxin] + 2 S-adenosyl-L-methionine + 4 H(+) = [[Fe-S] cluster scaffold protein] + N(6)-[(R)-dihydrolipoyl]-L-lysyl-[protein] + 4 Fe(3+) + 2 hydrogen sulfide + 2 5'-deoxyadenosine + 2 L-methionine + 2 reduced [2Fe-2S]-[ferredoxin]. Its pathway is protein modification; protein lipoylation via endogenous pathway; protein N(6)-(lipoyl)lysine from octanoyl-[acyl-carrier-protein]: step 2/2. Its function is as follows. Catalyzes the radical-mediated insertion of two sulfur atoms into the C-6 and C-8 positions of the octanoyl moiety bound to the lipoyl domains of lipoate-dependent enzymes, thereby converting the octanoylated domains into lipoylated derivatives. This Francisella tularensis subsp. novicida (strain U112) protein is Lipoyl synthase.